The chain runs to 321 residues: Ribonuclease Z (321 aa).

Positions 62, 64, 66, 67, 139, 209, and 268 each coordinate Zn(2+). D66 acts as the Proton acceptor in catalysis.

It belongs to the RNase Z family. Homodimer. Requires Zn(2+) as cofactor.

The enzyme catalyses Endonucleolytic cleavage of RNA, removing extra 3' nucleotides from tRNA precursor, generating 3' termini of tRNAs. A 3'-hydroxy group is left at the tRNA terminus and a 5'-phosphoryl group is left at the trailer molecule.. In terms of biological role, zinc phosphodiesterase, which displays some tRNA 3'-processing endonuclease activity. Probably involved in tRNA maturation, by removing a 3'-trailer from precursor tRNA. The sequence is that of Ribonuclease Z from Pseudomonas putida (strain W619).